We begin with the raw amino-acid sequence, 239 residues long: Ribonuclease PH (239 aa).

Phosphate-binding positions include Arg88 and Gly126 to Arg128.

It belongs to the RNase PH family. In terms of assembly, homohexameric ring arranged as a trimer of dimers.

It carries out the reaction tRNA(n+1) + phosphate = tRNA(n) + a ribonucleoside 5'-diphosphate. Phosphorolytic 3'-5' exoribonuclease that plays an important role in tRNA 3'-end maturation. Removes nucleotide residues following the 3'-CCA terminus of tRNAs; can also add nucleotides to the ends of RNA molecules by using nucleoside diphosphates as substrates, but this may not be physiologically important. Probably plays a role in initiation of 16S rRNA degradation (leading to ribosome degradation) during starvation. The polypeptide is Ribonuclease PH (Coxiella burnetii (strain Dugway 5J108-111)).